The following is a 399-amino-acid chain: MGLSWTVPLEWGKNISTTNPLGFFPDHQLDPAFRANTRNPDWDHNPNKDHWTEANKVGVGAFGPGFTPPHGGLLGWSPQAQGMLKTLPADPPPASTNRQSGRQPTPITPPLRDTHPQAMQWNSTTFHQALQDPRVRGLYFPAGGSSSGTVNPVPTTASLISSIFSRIGDPAPNMESITSGFLGPLLVLQAGFFLLTKILTIPQSLDSWWTSLNFLGGAPVCLGQNSQSPTSNHSPTSCPPICPGYRWMCLRRFIIFLFILLLCLIFLLVLLDYQGMLPVCPLIPGSSTTSTGPCRTCMTLAQGTSMFPSCCCSKPSDGNCTCIPIPSSWAFGKFLWEWASARFSWLSLLVPFVQWFAGLSPTVWLSVIWMMWYWGPSLYDILSPFIPLLPIFFCLWVYI.

M1 bears the N-acetylmethionine mark. G2 is lipidated: N-myristoyl glycine; by host. The pre-S1 stretch occupies residues 2–118; sequence GLSWTVPLEW…PPLRDTHPQA (117 aa). The tract at residues 2-173 is pre-S; it reads GLSWTVPLEW…FSRIGDPAPN (172 aa). The Virion surface; in external conformation segment spans residues 2–180; the sequence is GLSWTVPLEW…APNMESITSG (179 aa). At 2–252 the chain is on the intravirion; in internal conformation side; that stretch reads GLSWTVPLEW…PGYRWMCLRR (251 aa). N-linked (GlcNAc...) asparagine glycosylation occurs at S4. The disordered stretch occupies residues 85–110; it reads KTLPADPPPASTNRQSGRQPTPITPP. Residues 95-105 are compositionally biased toward polar residues; the sequence is STNRQSGRQPT. Residues 119–173 form a pre-S2 region; the sequence is MQWNSTTFHQALQDPRVRGLYFPAGGSSSGTVNPVPTTASLISSIFSRIGDPAPN. A helical membrane pass occupies residues 181–201; the sequence is FLGPLLVLQAGFFLLTKILTI. The Intravirion; in external conformation portion of the chain corresponds to 202–252; that stretch reads PQSLDSWWTSLNFLGGAPVCLGQNSQSPTSNHSPTSCPPICPGYRWMCLRR. A helical transmembrane segment spans residues 253–273; it reads FIIFLFILLLCLIFLLVLLDY. The Virion surface portion of the chain corresponds to 274–347; that stretch reads QGMLPVCPLI…WASARFSWLS (74 aa). N-linked (GlcNAc...) asparagine; by host glycosylation is present at N319. The helical transmembrane segment at 348 to 368 threads the bilayer; the sequence is LLVPFVQWFAGLSPTVWLSVI. Topologically, residues 369-374 are intravirion; it reads WMMWYW. Residues 375 to 397 form a helical membrane-spanning segment; that stretch reads GPSLYDILSPFIPLLPIFFCLWV. Over 398–399 the chain is Virion surface; it reads YI.

It belongs to the orthohepadnavirus major surface antigen family. In terms of assembly, in its internal form (Li-HBsAg), interacts with the capsid protein and with the isoform S. Interacts with host chaperone CANX. As to quaternary structure, associates with host chaperone CANX through its pre-S2 N glycan; this association may be essential for isoform M proper secretion. Interacts with isoform L. Interacts with the antigens of satellite virus HDV (HDVAgs); this interaction is required for encapsidation of HDV genomic RNA. Post-translationally, isoform M is N-terminally acetylated by host at a ratio of 90%, and N-glycosylated by host at the pre-S2 region. In terms of processing, myristoylated.

Its subcellular location is the virion membrane. In terms of biological role, the large envelope protein exists in two topological conformations, one which is termed 'external' or Le-HBsAg and the other 'internal' or Li-HBsAg. In its external conformation the protein attaches the virus to cell receptors and thereby initiating infection. This interaction determines the species specificity and liver tropism. This attachment induces virion internalization predominantly through caveolin-mediated endocytosis. The large envelope protein also assures fusion between virion membrane and endosomal membrane. In its internal conformation the protein plays a role in virion morphogenesis and mediates the contact with the nucleocapsid like a matrix protein. The middle envelope protein plays an important role in the budding of the virion. It is involved in the induction of budding in a nucleocapsid independent way. In this process the majority of envelope proteins bud to form subviral lipoprotein particles of 22 nm of diameter that do not contain a nucleocapsid. The sequence is that of Large envelope protein from Homo sapiens (Human).